Consider the following 189-residue polypeptide: Elongation factor P (189 aa).

N6-(3,6-diaminohexanoyl)-5-hydroxylysine is present on lysine 34.

This sequence belongs to the elongation factor P family. In terms of processing, may be beta-lysylated on the epsilon-amino group of Lys-34 by the combined action of EpmA and EpmB, and then hydroxylated on the C5 position of the same residue by EpmC (if this protein is present). Lysylation is critical for the stimulatory effect of EF-P on peptide-bond formation. The lysylation moiety may extend toward the peptidyltransferase center and stabilize the terminal 3-CCA end of the tRNA. Hydroxylation of the C5 position on Lys-34 may allow additional potential stabilizing hydrogen-bond interactions with the P-tRNA.

The protein localises to the cytoplasm. It participates in protein biosynthesis; polypeptide chain elongation. Involved in peptide bond synthesis. Alleviates ribosome stalling that occurs when 3 or more consecutive Pro residues or the sequence PPG is present in a protein, possibly by augmenting the peptidyl transferase activity of the ribosome. Modification of Lys-34 is required for alleviation. The polypeptide is Elongation factor P (Buchnera aphidicola subsp. Acyrthosiphon pisum (strain APS) (Acyrthosiphon pisum symbiotic bacterium)).